The following is a 63-amino-acid chain: 2-hydroxymuconate tautomerase (63 aa).

The Proton acceptor; via imino nitrogen role is filled by P2.

Belongs to the 4-oxalocrotonate tautomerase family. As to quaternary structure, homohexamer.

It carries out the reaction (2Z,4E)-2-hydroxyhexa-2,4-dienedioate = (3E)-2-oxohex-3-enedioate. The protein operates within aromatic compound metabolism; salicylate degradation. Catalyzes the ketonization of 2-hydroxymuconate stereoselectively to yield 2-oxo-3-hexenedioate. This chain is 2-hydroxymuconate tautomerase (nahJ), found in Stutzerimonas stutzeri (Pseudomonas stutzeri).